A 497-amino-acid chain; its full sequence is Protein adenylyltransferase Fic (497 aa).

The tract at residues 1-30 (MGATDQALEAESKTTEPPKTPPVPEQHDRP) is disordered. The chain crosses the membrane as a helical span at residues 38–58 (LCHLLVLLFSGGLAAITLHIF). TPR repeat units follow at residues 123–156 (ALGA…APRH) and 157–191 (PTVL…SPSN). The short motif at 248–253 (TVGIEG) is the Inhibitory (S/T)XXXE(G/N) motif element. ATP is bound by residues Glu-252 and 333–336 (VGGH). Positions 302–437 (ITIKDILELH…IRPFVRFIAD (136 aa)) constitute a Fido domain. Residue His-380 is part of the active site. Residues 384-391 (DGNGRTSR), 416-417 (YY), and Asn-424 contribute to the ATP site. A disordered region spans residues 468–497 (GEGVPQLQSSQMGGGASIPEFHESGSGSLP).

This sequence belongs to the fic family. Homodimer.

The protein localises to the membrane. It carries out the reaction L-tyrosyl-[protein] + ATP = O-(5'-adenylyl)-L-tyrosyl-[protein] + diphosphate. The enzyme catalyses L-threonyl-[protein] + ATP = 3-O-(5'-adenylyl)-L-threonyl-[protein] + diphosphate. The catalysed reaction is 3-O-(5'-adenylyl)-L-threonyl-[protein] + H2O = L-threonyl-[protein] + AMP + H(+). The side chain of Glu-252 determines which of the two opposing activities (AMPylase or de-AMPylase) will take place. In response to endoplasmic reticulum stress, mediates de-AMPylase activity. Adenylyltransferase activity is inhibited by the inhibitory helix present at the N-terminus: Glu-252 binds ATP and competes with ATP-binding at Arg-391, thereby preventing adenylyltransferase activity. In unstressed cells, disengagement of Glu-252 promotes adenylyltransferase activity. Activation dissociates ATP-binding from Glu-252, allowing ordered binding of the entire ATP moiety with the alpha-phosphate in an orientation that is productive for accepting an incoming target hydroxyl side chain. Its function is as follows. Protein that can both mediate the addition of adenosine 5'-monophosphate (AMP) to specific residues of target proteins (AMPylation), and the removal of the same modification from target proteins (de-AMPylation), depending on the context. The side chain of Glu-252 determines which of the two opposing activities (AMPylase or de-AMPylase) will take place. Acts as a key regulator of the unfolded protein response (UPR) by mediating AMPylation or de-AMPylation of Hsc70-3/BiP. In unstressed cells, acts as an adenylyltransferase by mediating AMPylation of Hsc70-3/BiP at 'Thr-518', thereby inactivating it. In response to endoplasmic reticulum stress, acts as a phosphodiesterase by mediating removal of ATP (de-AMPylation) from Hsc70-3/BiP at 'Thr-518', leading to restore HSPA5/BiP activity. This chain is Protein adenylyltransferase Fic, found in Drosophila ananassae (Fruit fly).